Reading from the N-terminus, the 720-residue chain is Polyribonucleotide nucleotidyltransferase (720 aa).

2 residues coordinate Mg(2+): Asp-486 and Asp-492. Residues 553 to 612 form the KH domain; it reads PRITVINVPKEKIREVIGTGGKVIREIVEFSGAKIDIEDDGTIKIASTSEESTQKAIDRI. One can recognise an S1 motif domain in the interval 622-690; the sequence is GKIYNGKVVK…DRGKVKLSMR (69 aa). The disordered stretch occupies residues 698 to 720; sequence EDISDKVGPKGGRGGRGEGDLAE.

It belongs to the polyribonucleotide nucleotidyltransferase family. Mg(2+) serves as cofactor.

Its subcellular location is the cytoplasm. It carries out the reaction RNA(n+1) + phosphate = RNA(n) + a ribonucleoside 5'-diphosphate. In terms of biological role, involved in mRNA degradation. Catalyzes the phosphorolysis of single-stranded polyribonucleotides processively in the 3'- to 5'-direction. This chain is Polyribonucleotide nucleotidyltransferase, found in Granulibacter bethesdensis (strain ATCC BAA-1260 / CGDNIH1).